The sequence spans 573 residues: DNA ligase (573 aa).

Glu250 is a binding site for ATP. Lys252 serves as the catalytic N6-AMP-lysine intermediate. Residues Arg257, Arg272, Glu301, Phe342, Arg432, and Lys438 each contribute to the ATP site.

Belongs to the ATP-dependent DNA ligase family. Mg(2+) is required as a cofactor.

It catalyses the reaction ATP + (deoxyribonucleotide)n-3'-hydroxyl + 5'-phospho-(deoxyribonucleotide)m = (deoxyribonucleotide)n+m + AMP + diphosphate.. Its function is as follows. DNA ligase that seals nicks in double-stranded DNA during DNA replication, DNA recombination and DNA repair. This Methanococcus maripaludis (strain C5 / ATCC BAA-1333) protein is DNA ligase.